The following is a 431-amino-acid chain: Tyrosine--tRNA ligase (431 aa).

Position 33 (Y33) interacts with L-tyrosine. The 'HIGH' region motif lies at 38-47 (PTADSLHIGS). Residues Y172 and Q176 each coordinate L-tyrosine. Positions 234-238 (KFGKS) match the 'KMSKS' region motif. An ATP-binding site is contributed by K237. Positions 364 to 431 (LDIVTVLNEK…KKNYFVIRVV (68 aa)) constitute an S4 RNA-binding domain.

This sequence belongs to the class-I aminoacyl-tRNA synthetase family. TyrS type 1 subfamily. In terms of assembly, homodimer.

Its subcellular location is the cytoplasm. It carries out the reaction tRNA(Tyr) + L-tyrosine + ATP = L-tyrosyl-tRNA(Tyr) + AMP + diphosphate + H(+). In terms of biological role, catalyzes the attachment of tyrosine to tRNA(Tyr) in a two-step reaction: tyrosine is first activated by ATP to form Tyr-AMP and then transferred to the acceptor end of tRNA(Tyr). In Flavobacterium johnsoniae (strain ATCC 17061 / DSM 2064 / JCM 8514 / BCRC 14874 / CCUG 350202 / NBRC 14942 / NCIMB 11054 / UW101) (Cytophaga johnsonae), this protein is Tyrosine--tRNA ligase.